The sequence spans 483 residues: Glutamate--tRNA ligase 1 (483 aa).

Positions 9–19 (PSPTGFLHIGG) match the 'HIGH' region motif. The short motif at 238 to 242 (KLSKR) is the 'KMSKS' region element. Residue Lys-241 participates in ATP binding.

Belongs to the class-I aminoacyl-tRNA synthetase family. Glutamate--tRNA ligase type 1 subfamily. Monomer.

Its subcellular location is the cytoplasm. The catalysed reaction is tRNA(Glu) + L-glutamate + ATP = L-glutamyl-tRNA(Glu) + AMP + diphosphate. Its function is as follows. Catalyzes the attachment of glutamate to tRNA(Glu) in a two-step reaction: glutamate is first activated by ATP to form Glu-AMP and then transferred to the acceptor end of tRNA(Glu). The sequence is that of Glutamate--tRNA ligase 1 from Bartonella henselae (strain ATCC 49882 / DSM 28221 / CCUG 30454 / Houston 1) (Rochalimaea henselae).